Here is a 346-residue protein sequence, read N- to C-terminus: tRNA-specific 2-thiouridylase MnmA (346 aa).

6-13 contributes to the ATP binding site; the sequence is AMSGGTDS. Residue cysteine 90 is the Nucleophile of the active site. The cysteines at positions 90 and 187 are disulfide-linked. Glycine 114 provides a ligand contact to ATP. Residues 137-139 form an interaction with tRNA region; it reads KDQ. The Cysteine persulfide intermediate role is filled by cysteine 187. Residues 292–293 form an interaction with tRNA region; it reads RY.

It belongs to the MnmA/TRMU family.

It localises to the cytoplasm. The enzyme catalyses S-sulfanyl-L-cysteinyl-[protein] + uridine(34) in tRNA + AH2 + ATP = 2-thiouridine(34) in tRNA + L-cysteinyl-[protein] + A + AMP + diphosphate + H(+). Catalyzes the 2-thiolation of uridine at the wobble position (U34) of tRNA, leading to the formation of s(2)U34. In Nitratidesulfovibrio vulgaris (strain ATCC 29579 / DSM 644 / CCUG 34227 / NCIMB 8303 / VKM B-1760 / Hildenborough) (Desulfovibrio vulgaris), this protein is tRNA-specific 2-thiouridylase MnmA.